We begin with the raw amino-acid sequence, 363 residues long: Lipoyl synthase (363 aa).

Positions 55, 60, 66, 81, 85, 88, and 292 each coordinate [4Fe-4S] cluster. The region spanning 67 to 281 (WESREATFLI…SKLAKELGFG (215 aa)) is the Radical SAM core domain. The segment at 338–363 (PSEETPVTTRMAKTPAQSNSVAATIR) is disordered. Polar residues predominate over residues 352–363 (PAQSNSVAATIR).

Belongs to the radical SAM superfamily. Lipoyl synthase family. Requires [4Fe-4S] cluster as cofactor.

The protein localises to the cytoplasm. It catalyses the reaction [[Fe-S] cluster scaffold protein carrying a second [4Fe-4S](2+) cluster] + N(6)-octanoyl-L-lysyl-[protein] + 2 oxidized [2Fe-2S]-[ferredoxin] + 2 S-adenosyl-L-methionine + 4 H(+) = [[Fe-S] cluster scaffold protein] + N(6)-[(R)-dihydrolipoyl]-L-lysyl-[protein] + 4 Fe(3+) + 2 hydrogen sulfide + 2 5'-deoxyadenosine + 2 L-methionine + 2 reduced [2Fe-2S]-[ferredoxin]. Its pathway is protein modification; protein lipoylation via endogenous pathway; protein N(6)-(lipoyl)lysine from octanoyl-[acyl-carrier-protein]: step 2/2. Functionally, catalyzes the radical-mediated insertion of two sulfur atoms into the C-6 and C-8 positions of the octanoyl moiety bound to the lipoyl domains of lipoate-dependent enzymes, thereby converting the octanoylated domains into lipoylated derivatives. In Corynebacterium aurimucosum (strain ATCC 700975 / DSM 44827 / CIP 107346 / CN-1) (Corynebacterium nigricans), this protein is Lipoyl synthase.